Here is a 46-residue protein sequence, read N- to C-terminus: Protein PsbN (46 aa).

A helical transmembrane segment spans residues 7-27; the sequence is GLSIAITFAVILLALTGFSIY.

Belongs to the PsbN family.

It is found in the cellular thylakoid membrane. May play a role in photosystem I and II biogenesis. In Synechococcus elongatus (strain ATCC 33912 / PCC 7942 / FACHB-805) (Anacystis nidulans R2), this protein is Protein PsbN.